Reading from the N-terminus, the 610-residue chain is UvrABC system protein C (610 aa).

Residues 16–94 (SQPGVYRMYD…IKLYQPRYNV (79 aa)) enclose the GIY-YIG domain. Residues 204–239 (DQVLTQLIARMEKASQNLEFEEAARIRDQIQAVRRV) form the UVR domain.

It belongs to the UvrC family. In terms of assembly, interacts with UvrB in an incision complex.

It localises to the cytoplasm. Its function is as follows. The UvrABC repair system catalyzes the recognition and processing of DNA lesions. UvrC both incises the 5' and 3' sides of the lesion. The N-terminal half is responsible for the 3' incision and the C-terminal half is responsible for the 5' incision. This Escherichia fergusonii (strain ATCC 35469 / DSM 13698 / CCUG 18766 / IAM 14443 / JCM 21226 / LMG 7866 / NBRC 102419 / NCTC 12128 / CDC 0568-73) protein is UvrABC system protein C.